Consider the following 232-residue polypeptide: Orotidine 5'-phosphate decarboxylase (232 aa).

Residues Asp11, Lys33, 60 to 69 (DLKLYDIPNT), Thr119, Arg180, Gln189, Gly209, and Arg210 each bind substrate. Residue Lys62 is the Proton donor of the active site.

It belongs to the OMP decarboxylase family. Type 1 subfamily. Homodimer.

It carries out the reaction orotidine 5'-phosphate + H(+) = UMP + CO2. Its pathway is pyrimidine metabolism; UMP biosynthesis via de novo pathway; UMP from orotate: step 2/2. Functionally, catalyzes the decarboxylation of orotidine 5'-monophosphate (OMP) to uridine 5'-monophosphate (UMP). In Wigglesworthia glossinidia brevipalpis, this protein is Orotidine 5'-phosphate decarboxylase.